Reading from the N-terminus, the 679-residue chain is Probable metal-nicotianamine transporter YSL18 (679 aa).

The span at 1–17 (MESVGDPRDGPSTERAF) shows a compositional bias: basic and acidic residues. The disordered stretch occupies residues 1–21 (MESVGDPRDGPSTERAFEGQP). A run of 14 helical transmembrane segments spans residues 29–49 (VTLR…SVMM), 51–71 (LVFT…LGFF), 101–121 (CVVA…LLAM), 144–164 (FGRM…AIVP), 211–231 (LASL…NCGF), 255–275 (VGIG…GSII), 309–329 (VFCA…AISL), 379–399 (FAIS…PLMY), 407–427 (VAAA…GTGV), 441–461 (ILMF…SLVI), 497–517 (VIGT…FHHF), 547–567 (LPKY…AVCA), 593–613 (FLLV…VFLW), and 627–647 (VLAS…ALLA).

The protein belongs to the YSL (TC 2.A.67.2) family.

It is found in the membrane. Functionally, may be involved in the transport of nicotianamine-chelated metals. The chain is Probable metal-nicotianamine transporter YSL18 (YSL18) from Oryza sativa subsp. japonica (Rice).